A 604-amino-acid polypeptide reads, in one-letter code: M-phase inducer phosphatase cdc-25.1 (604 aa).

Disordered regions lie at residues 33–67 (PKTLFEEDGSSRDSGVSMTSCSDKSDASPEEDVDF) and 127–188 (EKRV…PFGD). Positions 44–54 (RDSGVSMTSCS) are enriched in polar residues. The segment covering 127–138 (EKRVMSERPTDN) has biased composition (basic and acidic residues). The Rhodanese domain maps to 305–413 (FDKKYIIVDC…LWSTAECRQI (109 aa)). 2 disordered regions span residues 443–464 (ASLKPNGETSHREEKKKRCTRS) and 562–588 (DFPDRPSESSSTTPAGEHLPLGEGGHQ).

This sequence belongs to the MPI phosphatase family.

It catalyses the reaction O-phospho-L-tyrosyl-[protein] + H2O = L-tyrosyl-[protein] + phosphate. In Caenorhabditis elegans, this protein is M-phase inducer phosphatase cdc-25.1 (cdc-25.1).